Consider the following 205-residue polypeptide: Small ribosomal subunit protein uS4 (205 aa).

The segment covering 1 to 16 (MSKRESSKYKIDRRMG) has biased composition (basic and acidic residues). A disordered region spans residues 1-46 (MSKRESSKYKIDRRMGENIWGRPKSPVNRREYGPGQHGQRRKGKLS). Positions 94 to 157 (SRLDAIVYRA…KQLVIVLEAV (64 aa)) constitute an S4 RNA-binding domain.

Belongs to the universal ribosomal protein uS4 family. In terms of assembly, part of the 30S ribosomal subunit. Contacts protein S5. The interaction surface between S4 and S5 is involved in control of translational fidelity.

In terms of biological role, one of the primary rRNA binding proteins, it binds directly to 16S rRNA where it nucleates assembly of the body of the 30S subunit. Functionally, with S5 and S12 plays an important role in translational accuracy. This is Small ribosomal subunit protein uS4 from Rhizobium johnstonii (strain DSM 114642 / LMG 32736 / 3841) (Rhizobium leguminosarum bv. viciae).